The primary structure comprises 97 residues: F-actin-capping protein subunit beta (97 aa).

Disordered stretches follow at residues 1–27 (RLPP…AMPS) and 43–66 (KSGS…ETVS). The segment covering 43–57 (KSGSGTMNLGGSLTR) has biased composition (polar residues). The residue at position 97 (K97) is an N6-acetyllysine.

Belongs to the F-actin-capping protein beta subunit family. As to quaternary structure, component of the F-actin capping complex, composed of a heterodimer of an alpha and a beta subunit. Subunit of dynactin, a multiprotein complex part of a tripartite complex with dynein and a adapter, such as BICDL1, BICD2 or HOOK3. The dynactin complex is built around ACTR1A/ACTB filament and consists of an actin-related filament composed of a shoulder domain, a pointed end and a barbed end. Its length is defined by its flexible shoulder domain. The soulder is composed of 2 DCTN1 subunits, 4 DCTN2 and 2 DCTN3. The 4 DCNT2 (via N-terminus) bind the ACTR1A filament and act as molecular rulers to determine the length. The pointed end is important for binding dynein-dynactin cargo adapters. Consists of 4 subunits: ACTR10, DCNT4, DCTN5 and DCTN6. The barbed end is composed of a CAPZA1:CAPZB heterodimers, which binds ACTR1A/ACTB filament and dynactin and stabilizes dynactin. Interacts with ARHGAP17. Interaction with RCSD1/CAPZIP. Component of the WASH complex, composed of F-actin-capping protein subunit alpha (CAPZA1, CAPZA2 or CAPZA3), F-actin-capping protein subunit beta (CAPZB), WASH (WASHC1, WASH2P, WASH3P, WASH4P, WASH5P or WASH6P), WASHC2 (WASHC2A or WASHC2C), WASHC3, WASHC4 and WASHC5. Interacts with ACTG1. Directly interacts with CRACD; this interaction decreases binding to actin.

The protein localises to the cytoplasm. It localises to the cytoskeleton. Its subcellular location is the myofibril. The protein resides in the sarcomere. Functionally, F-actin-capping proteins bind in a Ca(2+)-independent manner to the fast growing ends of actin filaments (barbed end) thereby blocking the exchange of subunits at these ends. Unlike other capping proteins (such as gelsolin and severin), these proteins do not sever actin filaments. Plays a role in the regulation of cell morphology and cytoskeletal organization. Forms, with CAPZB, the barbed end of the fast growing ends of actin filaments in the dynactin complex and stabilizes dynactin structure. The dynactin multiprotein complex activates the molecular motor dynein for ultra-processive transport along microtubules. This Mesocricetus auratus (Golden hamster) protein is F-actin-capping protein subunit beta.